The primary structure comprises 60 residues: MAVPRRKTSPSRRGMRRSADAIKKPTYVEDKDSGELRRPHHLDLKTGMYKGRQVLKKKDA.

Residues 1–16 show a composition bias toward basic residues; it reads MAVPRRKTSPSRRGMR. Residues 1–60 are disordered; the sequence is MAVPRRKTSPSRRGMRRSADAIKKPTYVEDKDSGELRRPHHLDLKTGMYKGRQVLKKKDA. The span at 17–44 shows a compositional bias: basic and acidic residues; it reads RSADAIKKPTYVEDKDSGELRRPHHLDL.

It belongs to the bacterial ribosomal protein bL32 family.

In Bradyrhizobium sp. (strain BTAi1 / ATCC BAA-1182), this protein is Large ribosomal subunit protein bL32.